The chain runs to 133 residues: MIIGLGSDLCNIERIQNSLDRFGERFENRVFTEIERAKARRRPFTIAGTYAKRFAAKEAFSKAVGTGFRRGVFMKDIGVVNARSGAPTLALTGGAAIRLAELLPDGHEASIHLTLTDDHPWAQAFVIIEAHRI.

The Mg(2+) site is built by Asp-8 and Glu-58.

This sequence belongs to the P-Pant transferase superfamily. AcpS family. It depends on Mg(2+) as a cofactor.

The protein resides in the cytoplasm. It carries out the reaction apo-[ACP] + CoA = holo-[ACP] + adenosine 3',5'-bisphosphate + H(+). In terms of biological role, transfers the 4'-phosphopantetheine moiety from coenzyme A to a Ser of acyl-carrier-protein. The polypeptide is Holo-[acyl-carrier-protein] synthase (Erythrobacter litoralis (strain HTCC2594)).